We begin with the raw amino-acid sequence, 184 residues long: Protein GrpE (184 aa).

Residues 1 to 26 show a composition bias toward polar residues; that stretch reads MANEQNEQAQDIQNEQVEQSNEQTQA. Residues 1–34 are disordered; it reads MANEQNEQAQDIQNEQVEQSNEQTQAEGVEQAND.

This sequence belongs to the GrpE family. As to quaternary structure, homodimer.

It is found in the cytoplasm. Participates actively in the response to hyperosmotic and heat shock by preventing the aggregation of stress-denatured proteins, in association with DnaK and GrpE. It is the nucleotide exchange factor for DnaK and may function as a thermosensor. Unfolded proteins bind initially to DnaJ; upon interaction with the DnaJ-bound protein, DnaK hydrolyzes its bound ATP, resulting in the formation of a stable complex. GrpE releases ADP from DnaK; ATP binding to DnaK triggers the release of the substrate protein, thus completing the reaction cycle. Several rounds of ATP-dependent interactions between DnaJ, DnaK and GrpE are required for fully efficient folding. In Acinetobacter baumannii (strain AB307-0294), this protein is Protein GrpE.